The chain runs to 687 residues: DNA-directed RNA polymerase subunit beta' (687 aa).

Cys69, Cys71, Cys87, and Cys90 together coordinate Zn(2+). Residues Asp491, Asp493, and Asp495 each contribute to the Mg(2+) site.

The protein belongs to the RNA polymerase beta' chain family. RpoC1 subfamily. In terms of assembly, in plastids the minimal PEP RNA polymerase catalytic core is composed of four subunits: alpha, beta, beta', and beta''. When a (nuclear-encoded) sigma factor is associated with the core the holoenzyme is formed, which can initiate transcription. It depends on Mg(2+) as a cofactor. Zn(2+) is required as a cofactor.

It is found in the plastid. Its subcellular location is the chloroplast. It catalyses the reaction RNA(n) + a ribonucleoside 5'-triphosphate = RNA(n+1) + diphosphate. Functionally, DNA-dependent RNA polymerase catalyzes the transcription of DNA into RNA using the four ribonucleoside triphosphates as substrates. The sequence is that of DNA-directed RNA polymerase subunit beta' from Glycine max (Soybean).